The following is a 218-amino-acid chain: UPF0319 protein PM0395 (218 aa).

Positions Met1–Ala21 are cleaved as a signal peptide.

It belongs to the UPF0319 family.

This chain is UPF0319 protein PM0395, found in Pasteurella multocida (strain Pm70).